Reading from the N-terminus, the 176-residue chain is ATP-dependent protease subunit HslV (176 aa).

Threonine 2 is a catalytic residue. Glycine 157, cysteine 160, and threonine 163 together coordinate Na(+).

This sequence belongs to the peptidase T1B family. HslV subfamily. A double ring-shaped homohexamer of HslV is capped on each side by a ring-shaped HslU homohexamer. The assembly of the HslU/HslV complex is dependent on binding of ATP.

It localises to the cytoplasm. The catalysed reaction is ATP-dependent cleavage of peptide bonds with broad specificity.. With respect to regulation, allosterically activated by HslU binding. Functionally, protease subunit of a proteasome-like degradation complex believed to be a general protein degrading machinery. The sequence is that of ATP-dependent protease subunit HslV from Pseudomonas fluorescens (strain SBW25).